A 312-amino-acid polypeptide reads, in one-letter code: Ribosomal RNA small subunit methyltransferase H (312 aa).

S-adenosyl-L-methionine-binding positions include 34–36 (GGH), Asp54, Phe81, Asp102, and Gln109.

Belongs to the methyltransferase superfamily. RsmH family.

The protein resides in the cytoplasm. The enzyme catalyses cytidine(1402) in 16S rRNA + S-adenosyl-L-methionine = N(4)-methylcytidine(1402) in 16S rRNA + S-adenosyl-L-homocysteine + H(+). Its function is as follows. Specifically methylates the N4 position of cytidine in position 1402 (C1402) of 16S rRNA. This chain is Ribosomal RNA small subunit methyltransferase H, found in Geotalea uraniireducens (strain Rf4) (Geobacter uraniireducens).